Here is a 55-residue protein sequence, read N- to C-terminus: MAKGGREKIKLESTAGTGHFYTTSKNKRTTPEKLEFMKYDPKARKHVAYKEVKLK.

Positions 1-11 (MAKGGREKIKL) are enriched in basic and acidic residues. The interval 1 to 27 (MAKGGREKIKLESTAGTGHFYTTSKNK) is disordered. Residues 14–24 (TAGTGHFYTTS) are compositionally biased toward polar residues.

It belongs to the bacterial ribosomal protein bL33 family.

This is Large ribosomal subunit protein bL33 from Dechloromonas aromatica (strain RCB).